The chain runs to 490 residues: 3-octaprenyl-4-hydroxybenzoate carboxy-lyase (490 aa).

Residue Asn172 participates in Mn(2+) binding. Residues 175–177, 189–191, and 194–195 each bind prenylated FMN; these read IYR, RWL, and RG. Glu238 lines the Mn(2+) pocket. Residue Asp287 is the Proton donor of the active site.

Belongs to the UbiD family. As to quaternary structure, homohexamer. Prenylated FMN is required as a cofactor. It depends on Mn(2+) as a cofactor.

It localises to the cell membrane. The enzyme catalyses a 4-hydroxy-3-(all-trans-polyprenyl)benzoate + H(+) = a 2-(all-trans-polyprenyl)phenol + CO2. Its pathway is cofactor biosynthesis; ubiquinone biosynthesis. In terms of biological role, catalyzes the decarboxylation of 3-octaprenyl-4-hydroxy benzoate to 2-octaprenylphenol, an intermediate step in ubiquinone biosynthesis. This chain is 3-octaprenyl-4-hydroxybenzoate carboxy-lyase, found in Saccharophagus degradans (strain 2-40 / ATCC 43961 / DSM 17024).